Here is a 243-residue protein sequence, read N- to C-terminus: Pyridoxine 5'-phosphate synthase (243 aa).

A 3-amino-2-oxopropyl phosphate-binding site is contributed by Asn-7. 9 to 10 (DH) contributes to the 1-deoxy-D-xylulose 5-phosphate binding site. Arg-18 contacts 3-amino-2-oxopropyl phosphate. Residue His-43 is the Proton acceptor of the active site. Arg-45 and His-50 together coordinate 1-deoxy-D-xylulose 5-phosphate. Catalysis depends on Glu-70, which acts as the Proton acceptor. Residue Thr-100 coordinates 1-deoxy-D-xylulose 5-phosphate. His-190 (proton donor) is an active-site residue. 3-amino-2-oxopropyl phosphate contacts are provided by residues Gly-191 and 212–213 (GH).

Belongs to the PNP synthase family. As to quaternary structure, homooctamer; tetramer of dimers.

The protein localises to the cytoplasm. The catalysed reaction is 3-amino-2-oxopropyl phosphate + 1-deoxy-D-xylulose 5-phosphate = pyridoxine 5'-phosphate + phosphate + 2 H2O + H(+). It participates in cofactor biosynthesis; pyridoxine 5'-phosphate biosynthesis; pyridoxine 5'-phosphate from D-erythrose 4-phosphate: step 5/5. Functionally, catalyzes the complicated ring closure reaction between the two acyclic compounds 1-deoxy-D-xylulose-5-phosphate (DXP) and 3-amino-2-oxopropyl phosphate (1-amino-acetone-3-phosphate or AAP) to form pyridoxine 5'-phosphate (PNP) and inorganic phosphate. The sequence is that of Pyridoxine 5'-phosphate synthase from Prochlorococcus marinus (strain MIT 9211).